Consider the following 281-residue polypeptide: 2-dehydro-3-deoxyphosphooctonate aldolase (281 aa).

This sequence belongs to the KdsA family.

It localises to the cytoplasm. The catalysed reaction is D-arabinose 5-phosphate + phosphoenolpyruvate + H2O = 3-deoxy-alpha-D-manno-2-octulosonate-8-phosphate + phosphate. Its pathway is carbohydrate biosynthesis; 3-deoxy-D-manno-octulosonate biosynthesis; 3-deoxy-D-manno-octulosonate from D-ribulose 5-phosphate: step 2/3. It participates in bacterial outer membrane biogenesis; lipopolysaccharide biosynthesis. In Pseudomonas syringae pv. syringae (strain B728a), this protein is 2-dehydro-3-deoxyphosphooctonate aldolase.